A 799-amino-acid chain; its full sequence is Disintegrin and metalloproteinase domain-containing protein B (799 aa).

The signal sequence occupies residues 1–23 (MKAFSCLLSVIATAASLFQHVDA). Over 24–707 (RSHARDKLNN…VSDWVSRHKP (684 aa)) the chain is Extracellular. 5 N-linked (GlcNAc...) asparagine glycosylation sites follow: asparagine 33, asparagine 227, asparagine 228, asparagine 314, and asparagine 408. Positions 272-511 (KVALIGVVAD…RTILTSCLTT (240 aa)) constitute a Peptidase M12B domain. Disulfide bonds link cysteine 396–cysteine 496, cysteine 449–cysteine 460, and cysteine 581–cysteine 601. Zn(2+) is bound at residue histidine 432. Glutamate 433 is a catalytic residue. Zn(2+) contacts are provided by histidine 436 and histidine 442. In terms of domain architecture, Disintegrin spans 520–609 (GQQCGNGIVE…DCPHDIHSKD (90 aa)). Residues 708 to 728 (IVIGVAVGAGCLLLLAIASCI) traverse the membrane as a helical segment. At 729-799 (CGRSRRQRPR…PGHLPSTRYA (71 aa)) the chain is on the cytoplasmic side. The tract at residues 753–799 (VYNGWNGAPPNAQQSSPGGHPPYNNIPPPINAPPPAYPGHLPSTRYA) is disordered. Over residues 776–789 (NNIPPPINAPPPAY) the composition is skewed to pro residues.

Requires Zn(2+) as cofactor.

Its subcellular location is the membrane. Probable zinc protease. The protein is Disintegrin and metalloproteinase domain-containing protein B (ADM-B) of Arthroderma benhamiae (strain ATCC MYA-4681 / CBS 112371) (Trichophyton mentagrophytes).